We begin with the raw amino-acid sequence, 89 residues long: Small ribosomal subunit protein uS15 (89 aa).

This sequence belongs to the universal ribosomal protein uS15 family. Part of the 30S ribosomal subunit. Forms a bridge to the 50S subunit in the 70S ribosome, contacting the 23S rRNA.

Functionally, one of the primary rRNA binding proteins, it binds directly to 16S rRNA where it helps nucleate assembly of the platform of the 30S subunit by binding and bridging several RNA helices of the 16S rRNA. Its function is as follows. Forms an intersubunit bridge (bridge B4) with the 23S rRNA of the 50S subunit in the ribosome. The polypeptide is Small ribosomal subunit protein uS15 (Acinetobacter baylyi (strain ATCC 33305 / BD413 / ADP1)).